Here is a 757-residue protein sequence, read N- to C-terminus: 5-methyltetrahydropteroyltriglutamate--homocysteine methyltransferase (757 aa).

5-methyltetrahydropteroyltri-L-glutamate contacts are provided by residues 15-18 and Lys114; that span reads RELK. Residues 428–430 and Glu481 contribute to the L-homocysteine site; that span reads IGS. L-methionine-binding positions include 428 to 430 and Glu481; that span reads IGS. 5-methyltetrahydropteroyltri-L-glutamate-binding positions include 512-513 and Trp558; that span reads RC. An L-homocysteine-binding site is contributed by Asp596. Residue Asp596 coordinates L-methionine. 5-methyltetrahydropteroyltri-L-glutamate is bound at residue Glu602. Positions 639, 641, and 663 each coordinate Zn(2+). His692 (proton donor) is an active-site residue. Cys724 is a binding site for Zn(2+).

The protein belongs to the vitamin-B12 independent methionine synthase family. Zn(2+) serves as cofactor.

The catalysed reaction is 5-methyltetrahydropteroyltri-L-glutamate + L-homocysteine = tetrahydropteroyltri-L-glutamate + L-methionine. The protein operates within amino-acid biosynthesis; L-methionine biosynthesis via de novo pathway; L-methionine from L-homocysteine (MetE route): step 1/1. In terms of biological role, catalyzes the transfer of a methyl group from 5-methyltetrahydrofolate to homocysteine resulting in methionine formation. The chain is 5-methyltetrahydropteroyltriglutamate--homocysteine methyltransferase from Lactococcus lactis subsp. cremoris (strain MG1363).